Here is a 425-residue protein sequence, read N- to C-terminus: Probable isoprenylcysteine alpha-carbonyl methylesterase ICMEL1 (425 aa).

Over residues 1 to 10 (MQVELADRAA) the composition is skewed to basic and acidic residues. Residues 1–42 (MQVELADRAAARPSETGEAPPSSPAAAAAASAAAEDAPLLPG) form a disordered region. Low complexity predominate over residues 24–34 (PAAAAAASAAA). Helical transmembrane passes span 99–119 (FLAL…VVYY) and 154–174 (VVAF…GALL). Substrate-binding positions include 160-162 (GGA) and 231-233 (QSA). Residues Ser-232, Asp-334, and His-366 contribute to the active site.

It belongs to the AB hydrolase superfamily. Isoprenylcysteine methylesterase family.

The protein localises to the endoplasmic reticulum membrane. It localises to the golgi apparatus membrane. The enzyme catalyses [protein]-C-terminal S-[(2E,6E)-farnesyl]-L-cysteine methyl ester + H2O = [protein]-C-terminal S-[(2E,6E)-farnesyl]-L-cysteine + methanol + H(+). Catalyzes the demethylation of isoprenylcysteine methylesters. This is Probable isoprenylcysteine alpha-carbonyl methylesterase ICMEL1 (IMCEL1) from Oryza sativa subsp. japonica (Rice).